The sequence spans 331 residues: L-lactate dehydrogenase A chain (331 aa).

NAD(+)-binding positions include G29 to K57 and R98. The substrate site is built by R105, N137, and R168. N137 contributes to the NAD(+) binding site. The Proton acceptor role is filled by H192. T247 is a binding site for substrate.

Belongs to the LDH/MDH superfamily. LDH family. Homotetramer.

The protein resides in the cytoplasm. It carries out the reaction (S)-lactate + NAD(+) = pyruvate + NADH + H(+). The protein operates within fermentation; pyruvate fermentation to lactate; (S)-lactate from pyruvate: step 1/1. Functionally, interconverts simultaneously and stereospecifically pyruvate and lactate with concomitant interconversion of NADH and NAD(+). The sequence is that of L-lactate dehydrogenase A chain (ldha) from Patagonotothen tessellata (Black southern cod).